We begin with the raw amino-acid sequence, 125 residues long: Diol dehydratase-reactivating factor small subunit (125 aa).

Glutamate 31 serves as a coordination point for Mg(2+).

The protein belongs to the DdrB/PduH family. Component of the DDR complex, a heterotetramer of DdrA(2)/DdrB(2). The DDR complex interacts with the diol dehydratase complex in the presence of ADP but not ATP. Mg(2+) is required as a cofactor.

The enzyme catalyses ATP + H2O = ADP + phosphate + H(+). In terms of biological role, small subunit of the diol dehydratase-reactivating factor (DDR), which reactivates suicidally inhibited adenosylcobalamin-dependent diol dehydratase (DD, pddA, pddB, pddC). DDR acts as a chaperone, reactivates inactivated DD holoenzyme in the presence of ATP, Mg(2+) and free adenosylcobalamin (AdoCbl), by mediating the exchange of the tightly bound damaged cofactor AdoCbl for a free intact one. Reactivation takes place in two steps: ADP-dependent cobalamin release, and ATP-dependent dissociation of the DD apoenzyme-DDR complex. DDR has weak ATPase activity which is required for DD reactivation. Activates glycerol-inactivated, O2-inactivated holoenzyme and inactivated enzyme-cyanocobalamin complex. Also reactivates glycerol-inactivated hologlycerol dehydratase, a DD isozyme. This chain is Diol dehydratase-reactivating factor small subunit, found in Klebsiella michiganensis (strain ATCC 8724 / DSM 4798 / JCM 20051 / NBRC 3318 / NRRL B-199 / KCTC 1686 / BUCSAV 143 / CCM 1901).